A 352-amino-acid polypeptide reads, in one-letter code: UPF0324 membrane protein BCE_5279 (352 aa).

Transmembrane regions (helical) follow at residues 25–47, 52–71, 111–130, 140–162, 169–191, 201–223, 230–252, 267–289, 291–313, and 328–350; these read FGFS…LAEL, IMGQ…AAIG, VLVI…YGLT, GILT…APQV, TAVG…TLLY, YGVF…APGG, AVIV…GLWF, LPIP…GIIP, VVAG…GLGL, and FVAG…YALG.

This sequence belongs to the UPF0324 family.

Its subcellular location is the cell membrane. The sequence is that of UPF0324 membrane protein BCE_5279 from Bacillus cereus (strain ATCC 10987 / NRS 248).